The following is a 212-amino-acid chain: Deoxyribose-phosphate aldolase (212 aa).

Catalysis depends on Asp-89, which acts as the Proton donor/acceptor. The Schiff-base intermediate with acetaldehyde role is filled by Lys-151. The Proton donor/acceptor role is filled by Lys-180.

The protein belongs to the DeoC/FbaB aldolase family. DeoC type 1 subfamily.

It is found in the cytoplasm. The catalysed reaction is 2-deoxy-D-ribose 5-phosphate = D-glyceraldehyde 3-phosphate + acetaldehyde. Its pathway is carbohydrate degradation; 2-deoxy-D-ribose 1-phosphate degradation; D-glyceraldehyde 3-phosphate and acetaldehyde from 2-deoxy-alpha-D-ribose 1-phosphate: step 2/2. Catalyzes a reversible aldol reaction between acetaldehyde and D-glyceraldehyde 3-phosphate to generate 2-deoxy-D-ribose 5-phosphate. The chain is Deoxyribose-phosphate aldolase from Clostridium botulinum (strain ATCC 19397 / Type A).